We begin with the raw amino-acid sequence, 366 residues long: Phospho-N-acetylmuramoyl-pentapeptide-transferase (366 aa).

Helical transmembrane passes span 3–23 (QIFI…PVLI), 55–75 (IAIL…GLVF), 80–100 (PGVS…VGFA), 118–138 (AKLI…LQFP), 161–181 (IAVG…NIVI), 197–217 (LASG…FWQF), 235–255 (PLDL…FLWW), 262–282 (IFMG…LSIT), 287–307 (LLMI…VIQV), and 341–361 (FWLL…GEWL).

This sequence belongs to the glycosyltransferase 4 family. MraY subfamily. Mg(2+) is required as a cofactor.

The protein localises to the cell membrane. It catalyses the reaction UDP-N-acetyl-alpha-D-muramoyl-L-alanyl-gamma-D-glutamyl-meso-2,6-diaminopimeloyl-D-alanyl-D-alanine + di-trans,octa-cis-undecaprenyl phosphate = di-trans,octa-cis-undecaprenyl diphospho-N-acetyl-alpha-D-muramoyl-L-alanyl-D-glutamyl-meso-2,6-diaminopimeloyl-D-alanyl-D-alanine + UMP. It participates in cell wall biogenesis; peptidoglycan biosynthesis. Functionally, catalyzes the initial step of the lipid cycle reactions in the biosynthesis of the cell wall peptidoglycan: transfers peptidoglycan precursor phospho-MurNAc-pentapeptide from UDP-MurNAc-pentapeptide onto the lipid carrier undecaprenyl phosphate, yielding undecaprenyl-pyrophosphoryl-MurNAc-pentapeptide, known as lipid I. The protein is Phospho-N-acetylmuramoyl-pentapeptide-transferase of Corynebacterium urealyticum (strain ATCC 43042 / DSM 7109).